Here is a 249-residue protein sequence, read N- to C-terminus: Phosphoribosylaminoimidazole-succinocarboxamide synthase (249 aa).

Belongs to the SAICAR synthetase family.

It catalyses the reaction 5-amino-1-(5-phospho-D-ribosyl)imidazole-4-carboxylate + L-aspartate + ATP = (2S)-2-[5-amino-1-(5-phospho-beta-D-ribosyl)imidazole-4-carboxamido]succinate + ADP + phosphate + 2 H(+). It participates in purine metabolism; IMP biosynthesis via de novo pathway; 5-amino-1-(5-phospho-D-ribosyl)imidazole-4-carboxamide from 5-amino-1-(5-phospho-D-ribosyl)imidazole-4-carboxylate: step 1/2. This is Phosphoribosylaminoimidazole-succinocarboxamide synthase from Roseiflexus sp. (strain RS-1).